The primary structure comprises 1505 residues: Myosin-6 (1505 aa).

The region spanning 8-57 (SVGSFVWVEDPDEAWIDGEVVQVNGDEIKVLCTSGKHVVTKISNAYPKDV) is the Myosin N-terminal SH3-like domain. The Myosin motor domain maps to 62–731 (SGVDDMTRLA…QMADLDTRRT (670 aa)). Residues 156–163 (GESGAGKT) and 209–217 (NNNSSRFGK) contribute to the ATP site. 4 actin-binding regions span residues 495–529 (LIEK…YQTF), 531–554 (THKR…AGDV), 589–612 (FPPM…KQQL), and 612–634 (LVSL…KPNN). IQ domains lie at 734-763 (LGRS…SAKQ), 757-786 (LRNS…EAAA), 782-811 (REAA…AAVS), 805-834 (LYSA…TKAA), 830-859 (QTKA…AAIT), and 853-882 (LKKA…AARE). Residues 883 to 1048 (TGALQAAKNK…AEKKIMHQQT (166 aa)) adopt a coiled-coil conformation. Residues 1148-1452 (DRLIQMIGSA…ISSMRTLMTE (305 aa)) form the Dilute domain.

Belongs to the TRAFAC class myosin-kinesin ATPase superfamily. Myosin family. Plant myosin class XI subfamily. Homodimer. Interacts with RABC2A and RABD1. As to expression, expressed in flowers, leaves, roots and stems.

It localises to the cytoplasm. In terms of biological role, myosin heavy chain that is required for the cell cycle-regulated transport of various organelles and proteins for their segregation. Functions by binding with its tail domain to receptor proteins on organelles and exerting force with its N-terminal motor domain against actin filaments, thereby transporting its cargo along polarized actin cables. Involved in the tip growth of root hair cells. Plays a major role in trafficking of Golgi stacks, mitochondria and peroxisomes during root hair development. Targets the peroxisome through an interaction with RABC2A. Required for development of pavement cells, trichomes, and stigmatic papillae. This is Myosin-6 (XI-2) from Arabidopsis thaliana (Mouse-ear cress).